The primary structure comprises 233 residues: Hydroxyacylglutathione hydrolase (233 aa).

The Zn(2+) site is built by histidine 52, histidine 54, aspartate 56, histidine 57, histidine 108, aspartate 125, and histidine 163.

The protein belongs to the metallo-beta-lactamase superfamily. Glyoxalase II family. Monomer. Zn(2+) serves as cofactor.

It carries out the reaction an S-(2-hydroxyacyl)glutathione + H2O = a 2-hydroxy carboxylate + glutathione + H(+). It functions in the pathway secondary metabolite metabolism; methylglyoxal degradation; (R)-lactate from methylglyoxal: step 2/2. In terms of biological role, thiolesterase that catalyzes the hydrolysis of S-D-lactoyl-glutathione to form glutathione and D-lactic acid. The sequence is that of Hydroxyacylglutathione hydrolase from Histophilus somni (strain 129Pt) (Haemophilus somnus).